Here is an 88-residue protein sequence, read N- to C-terminus: Small ribosomal subunit protein bS20 (88 aa).

The protein belongs to the bacterial ribosomal protein bS20 family. In terms of assembly, part of the 30S ribosomal subunit.

Binds directly to 16S ribosomal RNA. The sequence is that of Small ribosomal subunit protein bS20 (rpsT) from Bacillus subtilis (strain 168).